We begin with the raw amino-acid sequence, 266 residues long: 3-methyl-2-oxobutanoate hydroxymethyltransferase (266 aa).

Mg(2+) is bound by residues D45 and D84. 3-methyl-2-oxobutanoate contacts are provided by residues 45–46, D84, and K113; that span reads DS. E115 contacts Mg(2+). E183 acts as the Proton acceptor in catalysis.

This sequence belongs to the PanB family. As to quaternary structure, homodecamer; pentamer of dimers. The cofactor is Mg(2+).

It is found in the cytoplasm. It catalyses the reaction 3-methyl-2-oxobutanoate + (6R)-5,10-methylene-5,6,7,8-tetrahydrofolate + H2O = 2-dehydropantoate + (6S)-5,6,7,8-tetrahydrofolate. The protein operates within cofactor biosynthesis; (R)-pantothenate biosynthesis; (R)-pantoate from 3-methyl-2-oxobutanoate: step 1/2. Catalyzes the reversible reaction in which hydroxymethyl group from 5,10-methylenetetrahydrofolate is transferred onto alpha-ketoisovalerate to form ketopantoate. This Coxiella burnetii (strain CbuG_Q212) (Coxiella burnetii (strain Q212)) protein is 3-methyl-2-oxobutanoate hydroxymethyltransferase.